The following is a 187-amino-acid chain: UPF0301 protein CKO_04323 (187 aa).

It belongs to the UPF0301 (AlgH) family.

In Citrobacter koseri (strain ATCC BAA-895 / CDC 4225-83 / SGSC4696), this protein is UPF0301 protein CKO_04323.